The following is a 465-amino-acid chain: G1/S-specific cyclin CLN2 (465 aa).

The protein belongs to the cyclin family.

Functionally, essential for the control of the cell cycle at the G1/S (start) transition. Interacts with the CDC28 protein kinase to form MPF. The chain is G1/S-specific cyclin CLN2 (CLN2) from Candida albicans (Yeast).